The sequence spans 182 residues: Crossover junction endodeoxyribonuclease RuvC (182 aa).

Active-site residues include D7, E69, and D141. Mg(2+) contacts are provided by D7, E69, and D141.

This sequence belongs to the RuvC family. As to quaternary structure, homodimer which binds Holliday junction (HJ) DNA. The HJ becomes 2-fold symmetrical on binding to RuvC with unstacked arms; it has a different conformation from HJ DNA in complex with RuvA. In the full resolvosome a probable DNA-RuvA(4)-RuvB(12)-RuvC(2) complex forms which resolves the HJ. Requires Mg(2+) as cofactor.

It localises to the cytoplasm. The catalysed reaction is Endonucleolytic cleavage at a junction such as a reciprocal single-stranded crossover between two homologous DNA duplexes (Holliday junction).. Its function is as follows. The RuvA-RuvB-RuvC complex processes Holliday junction (HJ) DNA during genetic recombination and DNA repair. Endonuclease that resolves HJ intermediates. Cleaves cruciform DNA by making single-stranded nicks across the HJ at symmetrical positions within the homologous arms, yielding a 5'-phosphate and a 3'-hydroxyl group; requires a central core of homology in the junction. The consensus cleavage sequence is 5'-(A/T)TT(C/G)-3'. Cleavage occurs on the 3'-side of the TT dinucleotide at the point of strand exchange. HJ branch migration catalyzed by RuvA-RuvB allows RuvC to scan DNA until it finds its consensus sequence, where it cleaves and resolves the cruciform DNA. This Polaromonas naphthalenivorans (strain CJ2) protein is Crossover junction endodeoxyribonuclease RuvC.